The chain runs to 279 residues: DegV domain-containing protein M6_Spy1246 (279 aa).

A DegV domain is found at 4–278 (IKIVTDSSIT…EGAFAVMVRY (275 aa)). Residues T62 and S95 each contribute to the hexadecanoate site.

Its function is as follows. May bind long-chain fatty acids, such as palmitate, and may play a role in lipid transport or fatty acid metabolism. In Streptococcus pyogenes serotype M6 (strain ATCC BAA-946 / MGAS10394), this protein is DegV domain-containing protein M6_Spy1246.